The primary structure comprises 140 residues: Low calcium response locus protein T (140 aa).

This chain is Low calcium response locus protein T (lcrT), found in Yersinia pestis.